A 65-amino-acid polypeptide reads, in one-letter code: Large ribosomal subunit protein bL32 (65 aa).

It belongs to the bacterial ribosomal protein bL32 family.

This Phytoplasma australiense protein is Large ribosomal subunit protein bL32.